A 242-amino-acid chain; its full sequence is Endoglucanase (242 aa).

An N-terminal signal peptide occupies residues 1–21 (MQVIVLPLVFLATFATSGSLA). The active-site Nucleophile is the aspartate 47. N-linked (GlcNAc...) asparagine glycosylation is found at asparagine 79, asparagine 103, and asparagine 217.

This sequence belongs to the glycosyl hydrolase 45 (cellulase K) family. Expressed in larval carcasses and gut, and adult gut.

The protein resides in the secreted. The enzyme catalyses Endohydrolysis of (1-&gt;4)-beta-D-glucosidic linkages in cellulose, lichenin and cereal beta-D-glucans.. The protein is Endoglucanase of Phaedon cochleariae (Mustard beetle).